A 169-amino-acid polypeptide reads, in one-letter code: Large ribosomal subunit protein uL5 (169 aa).

It belongs to the universal ribosomal protein uL5 family. Part of the 50S ribosomal subunit; contacts the 5S rRNA and probably tRNA. Forms a bridge to the 30S subunit in the 70S ribosome.

Functionally, this is one of the proteins that bind and probably mediate the attachment of the 5S RNA into the large ribosomal subunit, where it forms part of the central protuberance. In the 70S ribosome it contacts protein S13 of the 30S subunit (bridge B1b), connecting the 2 subunits; this bridge is implicated in subunit movement. May contact the P site tRNA; the 5S rRNA and some of its associated proteins might help stabilize positioning of ribosome-bound tRNAs. The chain is Large ribosomal subunit protein uL5 from Methanosarcina barkeri (strain Fusaro / DSM 804).